A 128-amino-acid chain; its full sequence is Sulfurtransferase TusD (128 aa).

The active-site Cysteine persulfide intermediate is Cys-78.

Belongs to the DsrE/TusD family. As to quaternary structure, heterohexamer, formed by a dimer of trimers. The hexameric TusBCD complex contains 2 copies each of TusB, TusC and TusD. The TusBCD complex interacts with TusE.

It is found in the cytoplasm. In terms of biological role, part of a sulfur-relay system required for 2-thiolation of 5-methylaminomethyl-2-thiouridine (mnm(5)s(2)U) at tRNA wobble positions. Accepts sulfur from TusA and transfers it in turn to TusE. The polypeptide is Sulfurtransferase TusD (Escherichia coli O139:H28 (strain E24377A / ETEC)).